A 124-amino-acid polypeptide reads, in one-letter code: Small ribosomal subunit protein bS16 (124 aa).

The disordered stretch occupies residues 80–124 (AGLAKRPARNNPTKAQPGKKAQERAAEAKQKAEEAAAAASEAAAE). Residues 99-113 (KAQERAAEAKQKAEE) show a composition bias toward basic and acidic residues. Residues 114-124 (AAAAASEAAAE) show a composition bias toward low complexity.

The protein belongs to the bacterial ribosomal protein bS16 family.

This chain is Small ribosomal subunit protein bS16, found in Rhizobium meliloti (strain 1021) (Ensifer meliloti).